The following is a 1067-amino-acid chain: Carbamoyl phosphate synthase large chain (1067 aa).

Positions 1-401 (MPLNKDIKKV…AFLKGIRSLE (401 aa)) are carboxyphosphate synthetic domain. The ATP site is built by Arg-129, Arg-169, Gly-175, Gly-176, Lys-208, Val-210, Glu-215, Gly-241, Ile-242, His-243, Gln-284, and Glu-298. One can recognise an ATP-grasp 1 domain in the interval 133 to 327 (RDMMNRINQP…IAKVAAKIAL (195 aa)). 3 residues coordinate Mg(2+): Gln-284, Glu-298, and Asn-300. Mn(2+) contacts are provided by Gln-284, Glu-298, and Asn-300. Residues 402-549 (IGKYSLEHKK…YSTYEQYDEV (148 aa)) are oligomerization domain. Positions 550 to 932 (VVSDNKKVVV…ALYKGFVGAS (383 aa)) are carbamoyl phosphate synthetic domain. In terms of domain architecture, ATP-grasp 2 spans 674 to 864 (DDLLERLNIA…IVDIATRIML (191 aa)). ATP contacts are provided by Arg-710, Lys-749, Leu-751, Glu-755, Gly-780, Val-781, His-782, Ser-783, Gln-823, and Glu-835. Positions 823, 835, and 837 each coordinate Mg(2+). Mn(2+) contacts are provided by Gln-823, Glu-835, and Asn-837. One can recognise an MGS-like domain in the interval 933–1067 (MYTGDKGKTI…NRELEVFNLI (135 aa)). Positions 933 to 1067 (MYTGDKGKTI…NRELEVFNLI (135 aa)) are allosteric domain.

It belongs to the CarB family. As to quaternary structure, composed of two chains; the small (or glutamine) chain promotes the hydrolysis of glutamine to ammonia, which is used by the large (or ammonia) chain to synthesize carbamoyl phosphate. Tetramer of heterodimers (alpha,beta)4. It depends on Mg(2+) as a cofactor. The cofactor is Mn(2+).

It catalyses the reaction hydrogencarbonate + L-glutamine + 2 ATP + H2O = carbamoyl phosphate + L-glutamate + 2 ADP + phosphate + 2 H(+). It carries out the reaction hydrogencarbonate + NH4(+) + 2 ATP = carbamoyl phosphate + 2 ADP + phosphate + 2 H(+). It functions in the pathway amino-acid biosynthesis; L-arginine biosynthesis; carbamoyl phosphate from bicarbonate: step 1/1. The protein operates within pyrimidine metabolism; UMP biosynthesis via de novo pathway; (S)-dihydroorotate from bicarbonate: step 1/3. In terms of biological role, large subunit of the glutamine-dependent carbamoyl phosphate synthetase (CPSase). CPSase catalyzes the formation of carbamoyl phosphate from the ammonia moiety of glutamine, carbonate, and phosphate donated by ATP, constituting the first step of 2 biosynthetic pathways, one leading to arginine and/or urea and the other to pyrimidine nucleotides. The large subunit (synthetase) binds the substrates ammonia (free or transferred from glutamine from the small subunit), hydrogencarbonate and ATP and carries out an ATP-coupled ligase reaction, activating hydrogencarbonate by forming carboxy phosphate which reacts with ammonia to form carbamoyl phosphate. In Clostridium perfringens (strain SM101 / Type A), this protein is Carbamoyl phosphate synthase large chain.